The sequence spans 560 residues: Arginine--tRNA ligase (560 aa).

The 'HIGH' region motif lies at 122-132; it reads ANPNGPLHIGH.

Belongs to the class-I aminoacyl-tRNA synthetase family.

It is found in the cytoplasm. The catalysed reaction is tRNA(Arg) + L-arginine + ATP = L-arginyl-tRNA(Arg) + AMP + diphosphate. The sequence is that of Arginine--tRNA ligase (argS) from Methanothermobacter thermautotrophicus (strain ATCC 29096 / DSM 1053 / JCM 10044 / NBRC 100330 / Delta H) (Methanobacterium thermoautotrophicum).